The sequence spans 301 residues: Probable 5-dehydro-4-deoxyglucarate dehydratase (301 aa).

It belongs to the DapA family.

It catalyses the reaction 5-dehydro-4-deoxy-D-glucarate + H(+) = 2,5-dioxopentanoate + CO2 + H2O. It participates in carbohydrate acid metabolism; D-glucarate degradation; 2,5-dioxopentanoate from D-glucarate: step 2/2. In Cereibacter sphaeroides (strain KD131 / KCTC 12085) (Rhodobacter sphaeroides), this protein is Probable 5-dehydro-4-deoxyglucarate dehydratase.